We begin with the raw amino-acid sequence, 201 residues long: 3-isopropylmalate dehydratase small subunit (201 aa).

The protein belongs to the LeuD family. LeuD type 1 subfamily. As to quaternary structure, heterodimer of LeuC and LeuD.

The enzyme catalyses (2R,3S)-3-isopropylmalate = (2S)-2-isopropylmalate. It functions in the pathway amino-acid biosynthesis; L-leucine biosynthesis; L-leucine from 3-methyl-2-oxobutanoate: step 2/4. Its function is as follows. Catalyzes the isomerization between 2-isopropylmalate and 3-isopropylmalate, via the formation of 2-isopropylmaleate. This chain is 3-isopropylmalate dehydratase small subunit, found in Enterobacter sp. (strain 638).